Here is a 150-residue protein sequence, read N- to C-terminus: Transcriptional regulator MraZ (150 aa).

2 SpoVT-AbrB domains span residues 5–51 (VANL…PQPE) and 80–123 (ATEC…DEDT).

This sequence belongs to the MraZ family. As to quaternary structure, forms oligomers.

The protein resides in the cytoplasm. Its subcellular location is the nucleoid. The sequence is that of Transcriptional regulator MraZ from Thioalkalivibrio sulfidiphilus (strain HL-EbGR7).